Consider the following 251-residue polypeptide: MLTRKQYLLLSFIDQRLKLSGVSPSFDEMKDALGLKSKSGIHRLIKGLEERGFLKRLPHRARALEVLRLPCNLTFDGDGEALDDGQPAPLFGGPLPETGFSPQVIRGNFTPTLPSTQVPQVLFTESISLPLLGKIAAGTPIAALIDPTSSIDVPASMVRGGEHFALRIEGDSMIEAGILSGDLAVVRRCDEAENGTVIVALVDNEEATLKRLRRKGASIALEPANRAFKTQIYGPDRVRIQGRLVGLIRSY.

The H-T-H motif DNA-binding region spans 26-46; sequence FDEMKDALGLKSKSGIHRLIK. Residues Ser172 and Lys210 each act as for autocatalytic cleavage activity in the active site.

The protein belongs to the peptidase S24 family. As to quaternary structure, homodimer.

The catalysed reaction is Hydrolysis of Ala-|-Gly bond in repressor LexA.. In terms of biological role, represses a number of genes involved in the response to DNA damage (SOS response), including recA and lexA. In the presence of single-stranded DNA, RecA interacts with LexA causing an autocatalytic cleavage which disrupts the DNA-binding part of LexA, leading to derepression of the SOS regulon and eventually DNA repair. The protein is LexA repressor of Rhodospirillum rubrum (strain ATCC 11170 / ATH 1.1.1 / DSM 467 / LMG 4362 / NCIMB 8255 / S1).